Here is a 138-residue protein sequence, read N- to C-terminus: Ribosomal RNA large subunit methyltransferase H (138 aa).

S-adenosyl-L-methionine contacts are provided by residues Gly86 and 105–110 (LSPLTF).

This sequence belongs to the RNA methyltransferase RlmH family. Homodimer.

The protein resides in the cytoplasm. It carries out the reaction pseudouridine(1915) in 23S rRNA + S-adenosyl-L-methionine = N(3)-methylpseudouridine(1915) in 23S rRNA + S-adenosyl-L-homocysteine + H(+). Functionally, specifically methylates the pseudouridine at position 1915 (m3Psi1915) in 23S rRNA. The protein is Ribosomal RNA large subunit methyltransferase H of Prochlorococcus marinus (strain MIT 9215).